The following is a 965-amino-acid chain: Forespore membrane adapter protein MUG56 (965 aa).

The tract at residues 70 to 175 (SFLMHKSTDE…VQNSNSTSTS (106 aa)) is disordered. Residues 82 to 101 (DTPSNLDSPSTQNVGSTNNT) are compositionally biased toward polar residues. Residues 102–114 (RASQSLLRRSSSF) are compositionally biased toward low complexity. Positions 124–158 (THASTDNNPFSESSTLQPQTAERTSQQAVRSAITE) are enriched in polar residues. Residues 159–175 (TTNPSVSVQNSNSTSTS) show a composition bias toward low complexity. 2 PH domains span residues 562-737 (PTPV…EVAS) and 800-961 (VIRM…KEIN).

Belongs to the SPO71 family.

It is found in the cytoplasm. The protein localises to the nucleus. Its subcellular location is the prospore membrane. Its function is as follows. May recruit a lipid transfer protein to the forespore membrane during sporulation, thereby aiding forespore membrane formation. Required for meiosis. In Schizosaccharomyces pombe (strain 972 / ATCC 24843) (Fission yeast), this protein is Forespore membrane adapter protein MUG56.